Consider the following 460-residue polypeptide: TNF receptor-associated factor family protein DDB_G0290883 (460 aa).

The RING-type; degenerate zinc finger occupies 27–67 (CPICFEFIYKKQIYQCKSGHHACKECWEKSLETKKECMTCK). TRAF-type zinc fingers lie at residues 141-194 (SHLI…KKEL) and 196-253 (THYK…SELQ). The region spanning 320–448 (GYRNKWIISN…DDKLTIEIYI (129 aa)) is the MATH domain.

The protein belongs to the TNF receptor-associated factor family. A subfamily.

It is found in the cytoplasm. In terms of biological role, probable adapter protein and signal transducer that links members of the tumor necrosis factor receptor family to different signaling pathways by association with the receptor cytoplasmic domain and kinases. The sequence is that of TNF receptor-associated factor family protein DDB_G0290883 from Dictyostelium discoideum (Social amoeba).